The primary structure comprises 134 residues: UPF0102 protein SYNW1051 (134 aa).

It belongs to the UPF0102 family.

The chain is UPF0102 protein SYNW1051 from Parasynechococcus marenigrum (strain WH8102).